Consider the following 714-residue polypeptide: MSRIIMLIPTGTSVGLTSVSLGVIRAMERKGVRLSVFKPIAQPRAGGDAPDQTTTIVRANSTLPAAEPLKMSHVESLLSSNQKDVLMEEIIANYHANTKDAEVVLVEGLVPTRKHQFAQSLNYEIAKTLNAEIVFVMSQGTDTPEQLNERIELTRSSFGGAKNTNITGVIINKLNAPVDEQGRTRPDLSEIFDDSSKAQVIKIDPAKLQESSPLPVLGAVPWSFDLIATRAIDMARHLNATIINEGDIKTRRVKSVTFCARSIPHMLEHFRAGSLLVTSADRPDVLVAACLAAMNGVEIGALLLTGGYEMDARISKLCERAFATGLPVFMVNTNTWQTSLSLQSFNLEVPVDDHERIEKVQEYVANYVNAEWIESLTATSERSRRLSPPAFRYQLTELARKAGKRVVLPEGDEPRTVKAAAICAERGIATCVLLGNPDEINRVAASQGVELGAGIEIVDPEVVRESYVARLVELRKSKGMTEPVAREQLEDNVVLGTLMLEQDEVDGLVSGAVHTTANTIRPPLQLIKTAPGSSLVSSVFFMLLPEQVYVYGDCAINPDPTAEQLAEIAIQSADSAIAFGIEPRVAMLSYSTGTSGAGSDVEKVREATRLAQEKRPDLMIDGPLQYDAAVMADVAKSKAPNSPVAGRATVFIFPDLNTGNTTYKAVQRSADLISIGPMLQGMRKPVNDLSRGALVDDIVYTIALTAIQASQQQQ.

Residues 390–714 (AFRYQLTELA…TAIQASQQQQ (325 aa)) form a phosphate acetyltransferase region.

This sequence in the N-terminal section; belongs to the CobB/CobQ family. In the C-terminal section; belongs to the phosphate acetyltransferase and butyryltransferase family. As to quaternary structure, homohexamer.

Its subcellular location is the cytoplasm. The catalysed reaction is acetyl-CoA + phosphate = acetyl phosphate + CoA. The enzyme catalyses propanoyl-CoA + phosphate = propanoyl phosphate + CoA. The protein operates within metabolic intermediate biosynthesis; acetyl-CoA biosynthesis; acetyl-CoA from acetate: step 2/2. With respect to regulation, allosterically inhibited by NADH. Its function is as follows. Involved in acetate metabolism. Catalyzes the reversible interconversion of acetyl-CoA and acetyl phosphate. The direction of the overall reaction changes depending on growth conditions. Required for acetate recapture but not for acetate excretion when this organism is grown on ethanolamine (EA); is unable to complement an eutD deletion during growth on EA. Works with proprionate kinase PduW to capture exogenous propionate and regenerate propionyl-CoA during degradation of propionate and 1,2-propanediol (1,2-PD). The sequence is that of Phosphate acetyltransferase (pta) from Salmonella typhimurium (strain LT2 / SGSC1412 / ATCC 700720).